Here is a 439-residue protein sequence, read N- to C-terminus: MSSPKVGFVSLGCPKALVDSERILTQLRTEGYEVTPEYNDADVVVVNTCGFIDSAKAESLEAIGEAIAENGKVIVTGCMGVEESVIRQVHPSVLAVTGPQQYEEVVRAVHGVAPPRQDHNPYLDLVPPQGVKLTPRHYAYLKISEGCNHRCSFCIIPSMRGDLVSRPVGDVLSEAERLVRAGVKELLVISQDTSAYGVDIKYRSGFWNGRPVKTRMTELCAALSELGVWTRLHYVYPYPHVDEVIGLMADGKVLPYLDIPFQHASPRILRAMKRPAFEDKTLARIKRWREECPDLTLRSTFIVGFPGETEEDFQYLLDWMSEAQLDRVGCFQYSPVEGAPANTLDNPVPDEVKQERWERFMEHQQAISTARLSTRVGREIDVLIDSVDEEGAVGRSSADAPEIDGCVYVDSEQPLKAGDMVRVRVTDSDEYDLWGERIA.

An MTTase N-terminal domain is found at 4–114 (PKVGFVSLGC…VVRAVHGVAP (111 aa)). [4Fe-4S] cluster contacts are provided by C13, C49, C78, C147, C151, and C154. One can recognise a Radical SAM core domain in the interval 133–370 (LTPRHYAYLK…MEHQQAISTA (238 aa)). Residues 373-439 (STRVGREIDV…EYDLWGERIA (67 aa)) form the TRAM domain.

Belongs to the methylthiotransferase family. RimO subfamily. It depends on [4Fe-4S] cluster as a cofactor.

The protein resides in the cytoplasm. The catalysed reaction is L-aspartate(89)-[ribosomal protein uS12]-hydrogen + (sulfur carrier)-SH + AH2 + 2 S-adenosyl-L-methionine = 3-methylsulfanyl-L-aspartate(89)-[ribosomal protein uS12]-hydrogen + (sulfur carrier)-H + 5'-deoxyadenosine + L-methionine + A + S-adenosyl-L-homocysteine + 2 H(+). In terms of biological role, catalyzes the methylthiolation of an aspartic acid residue of ribosomal protein uS12. This chain is Ribosomal protein uS12 methylthiotransferase RimO, found in Bordetella parapertussis (strain 12822 / ATCC BAA-587 / NCTC 13253).